The primary structure comprises 701 residues: Polyribonucleotide nucleotidyltransferase (701 aa).

Residues aspartate 487 and aspartate 493 each contribute to the Mg(2+) site. The KH domain occupies 554-613 (PTMLAMKIDQDKIRDVIGKGGATIRAICEETKASIDIEDDGSIKIFGETKEAAEAAKQRV). The S1 motif domain occupies 623-691 (GKIYVGKVER…NRGRIKLSIK (69 aa)).

This sequence belongs to the polyribonucleotide nucleotidyltransferase family. In terms of assembly, component of the RNA degradosome, which is a multiprotein complex involved in RNA processing and mRNA degradation. Mg(2+) is required as a cofactor.

The protein localises to the cytoplasm. It catalyses the reaction RNA(n+1) + phosphate = RNA(n) + a ribonucleoside 5'-diphosphate. Its function is as follows. Involved in mRNA degradation. Catalyzes the phosphorolysis of single-stranded polyribonucleotides processively in the 3'- to 5'-direction. The polypeptide is Polyribonucleotide nucleotidyltransferase (Stutzerimonas stutzeri (strain A1501) (Pseudomonas stutzeri)).